The primary structure comprises 389 residues: Serpin-Z3 (389 aa).

Positions 337-361 (GTEAAAVSVAIMMPQCLMRNPDFVA) are RCL.

The protein belongs to the serpin family.

Its function is as follows. Probable serine protease inhibitor. This Arabidopsis thaliana (Mouse-ear cress) protein is Serpin-Z3.